Here is a 420-residue protein sequence, read N- to C-terminus: Tyrosine--tRNA ligase (420 aa).

An L-tyrosine-binding site is contributed by Tyr33. Positions 38–47 match the 'HIGH' region motif; it reads PTADSLHIGH. Residues Tyr168 and Gln172 each coordinate L-tyrosine. The short motif at 231-235 is the 'KMSKS' region element; it reads KFGKT. Lys234 is a binding site for ATP. One can recognise an S4 RNA-binding domain in the interval 353–419; sequence MLLVDALIKV…GKKNYYLVKL (67 aa).

It belongs to the class-I aminoacyl-tRNA synthetase family. TyrS type 1 subfamily. Homodimer.

It localises to the cytoplasm. The enzyme catalyses tRNA(Tyr) + L-tyrosine + ATP = L-tyrosyl-tRNA(Tyr) + AMP + diphosphate + H(+). Catalyzes the attachment of tyrosine to tRNA(Tyr) in a two-step reaction: tyrosine is first activated by ATP to form Tyr-AMP and then transferred to the acceptor end of tRNA(Tyr). The protein is Tyrosine--tRNA ligase of Desulfitobacterium hafniense (strain DSM 10664 / DCB-2).